We begin with the raw amino-acid sequence, 1347 residues long: Protein HUA2-LIKE 3 (1347 aa).

The PWWP domain occupies 24 to 81 (VGDLVLAKVKGFPAWPAVVDEPEKWGHSADSKKVTVHFFGTQQIAFCNHGDVESFTEE). Disordered stretches follow at residues 110 to 137 (KLKQQDQASGPKYAEETTAGSSGNTSQL), 251 to 320 (DGGP…SGSK), and 383 to 402 (DSCQRSQNSHERLNERPCEE). Positions 127–137 (TAGSSGNTSQL) are enriched in polar residues. Residues 302-314 (VESNNNSRNEGNG) show a composition bias toward low complexity. Basic and acidic residues predominate over residues 390-402 (NSHERLNERPCEE). A CID domain is found at 845–986 (DVQCTVESFE…HHIRELDSLS (142 aa)). 4 disordered regions span residues 1037 to 1069 (RDEDEGSDSDGGDFESVTPEHESRSLEEHVTPS), 1121 to 1140 (TSHQNVTSSSPPARPSQNAQ), 1147 to 1223 (YSNG…YSYM), and 1259 to 1347 (RMRP…WHQR). Over residues 1038–1049 (DEDEGSDSDGGD) the composition is skewed to acidic residues. Residues 1054–1069 (TPEHESRSLEEHVTPS) show a composition bias toward basic and acidic residues. The span at 1181–1191 (PSYSSRVSLSK) shows a compositional bias: polar residues. Residues 1208 to 1217 (SSHPPPPPPS) show a composition bias toward pro residues. Residues 1259 to 1272 (RMRPEPCENRDNWR) show a composition bias toward basic and acidic residues.

Expressed throughout young primordia, and vegetative and reproductive apices.

It localises to the nucleus. Probable transcription factor that acts with partial redundancy with HULK1 and HULK2. Plays diverse and essential roles in the control of plant development, physiology and flowering time. This chain is Protein HUA2-LIKE 3, found in Arabidopsis thaliana (Mouse-ear cress).